The sequence spans 138 residues: MNHCILACDVGLKRIGLATLKQEIILPLPPIIRINRNQAAKELDNVLKERNIHILVVGMPSGGEAEHSDTQKRISHFISLLSFEGEICFVNEDYTSFNALQSLSYMKRQNRARAQKDGRIDSLSACEILQRYIQSQKS.

It belongs to the YqgF nuclease family.

It localises to the cytoplasm. Functionally, could be a nuclease involved in processing of the 5'-end of pre-16S rRNA. The polypeptide is Putative pre-16S rRNA nuclease (Helicobacter hepaticus (strain ATCC 51449 / 3B1)).